Consider the following 333-residue polypeptide: Protein pelota homolog (333 aa).

Belongs to the eukaryotic release factor 1 family. Pelota subfamily. In terms of assembly, monomer. A divalent metal cation serves as cofactor.

The protein localises to the cytoplasm. Its function is as follows. May function in recognizing stalled ribosomes, interact with stem-loop structures in stalled mRNA molecules, and effect endonucleolytic cleavage of the mRNA. May play a role in the release non-functional ribosomes and degradation of damaged mRNAs. Has endoribonuclease activity. The polypeptide is Protein pelota homolog (Pyrobaculum arsenaticum (strain DSM 13514 / JCM 11321 / PZ6)).